The following is an 81-amino-acid chain: D-alanyl carrier protein (81 aa).

The 81-residue stretch at 1-81 (MADEAIKNGV…KIIAKVEQAQ (81 aa)) folds into the Carrier domain. Ser-39 carries the post-translational modification O-(pantetheine 4'-phosphoryl)serine.

It belongs to the DltC family. Post-translationally, 4'-phosphopantetheine is transferred from CoA to a specific serine of apo-DCP.

The protein resides in the cytoplasm. It functions in the pathway cell wall biogenesis; lipoteichoic acid biosynthesis. Carrier protein involved in the D-alanylation of lipoteichoic acid (LTA). The loading of thioester-linked D-alanine onto DltC is catalyzed by D-alanine--D-alanyl carrier protein ligase DltA. The DltC-carried D-alanyl group is further transferred to cell membrane phosphatidylglycerol (PG) by forming an ester bond, probably catalyzed by DltD. D-alanylation of LTA plays an important role in modulating the properties of the cell wall in Gram-positive bacteria, influencing the net charge of the cell wall. The sequence is that of D-alanyl carrier protein from Lacticaseibacillus casei (strain BL23) (Lactobacillus casei).